Consider the following 127-residue polypeptide: Major sperm protein 33 (127 aa).

Alanine 2 bears the N-acetylalanine mark. Residues 9-126 (DIQTQPGTKI…RRKNLPIEYN (118 aa)) enclose the MSP domain.

As to expression, sperm.

It is found in the cell projection. It localises to the pseudopodium. Its subcellular location is the cytoplasm. The protein resides in the cytoskeleton. Functionally, central component in molecular interactions underlying sperm crawling. Forms an extensive filament system that extends from sperm villipoda, along the leading edge of the pseudopod. In Caenorhabditis elegans, this protein is Major sperm protein 33 (msp-33).